The sequence spans 210 residues: Somatotropin (210 aa).

An N-terminal signal peptide occupies residues 1–22 (MGQVFLLMPVLLVSCFLSQGAA). A Zn(2+)-binding site is contributed by His38. Cys71 and Cys183 are oxidised to a cystine. Residue Glu192 participates in Zn(2+) binding. Cys200 and Cys208 are disulfide-bonded.

The protein belongs to the somatotropin/prolactin family.

It is found in the secreted. Functionally, growth hormone plays an important role in growth control and is involved in the regulation of several anabolic processes. Implicated as an osmoregulatory substance important for seawater adaptation. The polypeptide is Somatotropin (gh) (Oncorhynchus tshawytscha (Chinook salmon)).